Consider the following 283-residue polypeptide: Probable protein phosphatase 2C 17 (283 aa).

Residues 32–282 form the PPM-type phosphatase domain; it reads KYGFSLIKGK…DDISCIVVRF (251 aa). Residues aspartate 69, glycine 70, aspartate 234, and aspartate 273 each contribute to the Mn(2+) site.

The protein belongs to the PP2C family. It depends on Mg(2+) as a cofactor. Mn(2+) is required as a cofactor.

The catalysed reaction is O-phospho-L-seryl-[protein] + H2O = L-seryl-[protein] + phosphate. It catalyses the reaction O-phospho-L-threonyl-[protein] + H2O = L-threonyl-[protein] + phosphate. The protein is Probable protein phosphatase 2C 17 of Arabidopsis thaliana (Mouse-ear cress).